Reading from the N-terminus, the 737-residue chain is Probable beta-glucosidase L (737 aa).

The first 19 residues, 1 to 19, serve as a signal peptide directing secretion; that stretch reads MRSLIRSGALNAFLAASLA. N225 is a glycosylation site (N-linked (GlcNAc...) asparagine). Residue D253 is part of the active site. N-linked (GlcNAc...) asparagine glycans are attached at residues N340, N365, and N608.

Belongs to the glycosyl hydrolase 3 family.

Its subcellular location is the secreted. It catalyses the reaction Hydrolysis of terminal, non-reducing beta-D-glucosyl residues with release of beta-D-glucose.. It functions in the pathway glycan metabolism; cellulose degradation. In terms of biological role, beta-glucosidases are one of a number of cellulolytic enzymes involved in the degradation of cellulosic biomass. Catalyzes the last step releasing glucose from the inhibitory cellobiose. The sequence is that of Probable beta-glucosidase L (bglL) from Emericella nidulans (strain FGSC A4 / ATCC 38163 / CBS 112.46 / NRRL 194 / M139) (Aspergillus nidulans).